A 518-amino-acid chain; its full sequence is Putative BTB/POZ domain and WD-repeat protein R731 (518 aa).

Residues 22–92 (TDCQLHLTDS…FYGFPLEEPN (71 aa)) enclose the BTB domain. The segment at 224 to 246 (NHEESSDDEVNDDEDTDNEDTDD) is disordered. Acidic residues predominate over residues 228–246 (SSDDEVNDDEDTDNEDTDD). WD repeat units follow at residues 391 to 430 (NHST…SLIK) and 437 to 475 (FLKF…IIQN).

Belongs to the mimivirus BTB/WD family.

This chain is Putative BTB/POZ domain and WD-repeat protein R731, found in Acanthamoeba polyphaga (Amoeba).